The chain runs to 504 residues: Glucose-6-phosphate isomerase (504 aa).

Glu-333 acts as the Proton donor in catalysis. Active-site residues include His-364 and Lys-473.

The protein belongs to the GPI family.

The protein resides in the cytoplasm. The catalysed reaction is alpha-D-glucose 6-phosphate = beta-D-fructose 6-phosphate. It functions in the pathway carbohydrate biosynthesis; gluconeogenesis. Its pathway is carbohydrate degradation; glycolysis; D-glyceraldehyde 3-phosphate and glycerone phosphate from D-glucose: step 2/4. Catalyzes the reversible isomerization of glucose-6-phosphate to fructose-6-phosphate. This chain is Glucose-6-phosphate isomerase, found in Xanthomonas euvesicatoria pv. vesicatoria (strain 85-10) (Xanthomonas campestris pv. vesicatoria).